Here is a 253-residue protein sequence, read N- to C-terminus: tRNA pseudouridine synthase A (253 aa).

D53 (nucleophile) is an active-site residue. A substrate-binding site is contributed by Y112.

The protein belongs to the tRNA pseudouridine synthase TruA family. In terms of assembly, homodimer.

The catalysed reaction is uridine(38/39/40) in tRNA = pseudouridine(38/39/40) in tRNA. Functionally, formation of pseudouridine at positions 38, 39 and 40 in the anticodon stem and loop of transfer RNAs. This is tRNA pseudouridine synthase A from Lactococcus lactis subsp. lactis (strain IL1403) (Streptococcus lactis).